We begin with the raw amino-acid sequence, 142 residues long: Large ribosomal subunit protein uL11 (142 aa).

It belongs to the universal ribosomal protein uL11 family. As to quaternary structure, part of the ribosomal stalk of the 50S ribosomal subunit. Interacts with L10 and the large rRNA to form the base of the stalk. L10 forms an elongated spine to which L12 dimers bind in a sequential fashion forming a multimeric L10(L12)X complex. One or more lysine residues are methylated.

In terms of biological role, forms part of the ribosomal stalk which helps the ribosome interact with GTP-bound translation factors. The chain is Large ribosomal subunit protein uL11 from Shewanella halifaxensis (strain HAW-EB4).